The primary structure comprises 513 residues: Nitrogenase molybdenum-iron protein beta chain (513 aa).

The [8Fe-7S] cluster site is built by cysteine 70, cysteine 95, and cysteine 153.

Belongs to the NifD/NifK/NifE/NifN family. Tetramer of two alpha and two beta chains. Forms complex with the iron protein (nitrogenase component 2). Requires [8Fe-7S] cluster as cofactor.

The catalysed reaction is N2 + 8 reduced [2Fe-2S]-[ferredoxin] + 16 ATP + 16 H2O = H2 + 8 oxidized [2Fe-2S]-[ferredoxin] + 2 NH4(+) + 16 ADP + 16 phosphate + 6 H(+). In terms of biological role, this molybdenum-iron protein is part of the nitrogenase complex that catalyzes the key enzymatic reactions in nitrogen fixation. The chain is Nitrogenase molybdenum-iron protein beta chain (nifK1) from Sinorhizobium fredii (strain NBRC 101917 / NGR234).